The sequence spans 685 residues: tRNA-dihydrouridine(47) synthase [NAD(P)(+)]-like (685 aa).

The span at 1–12 (MAATAAAAAAAP) shows a compositional bias: low complexity. 3 disordered regions span residues 1-91 (MAAT…SSSH), 209-234 (AAND…PLCN), and 257-314 (LIDN…SCRT). Residues 13–29 (PADPPDSSPAASSPPRP) show a composition bias toward pro residues. Residues 87–118 (KSSSHLCIEVGKSGNVSSCKYGDSCRFSHDID) form a C3H1-type zinc finger. Composition is skewed to basic and acidic residues over residues 209 to 221 (AAND…HDNL) and 273 to 284 (SKVESDEIDKHG). Residues 287 to 314 (TLNTNTESEDPNLSNGLEPSNNSSSCRT) are compositionally biased toward polar residues. Residues 338 to 340 (PLT) and Q392 each bind FMN. Residue C423 is the Proton donor of the active site. Residues K462, H492, 525–527 (NGD), and 550–551 (AR) contribute to the FMN site.

The protein belongs to the Dus family. Dus3 subfamily. The cofactor is FMN.

The catalysed reaction is 5,6-dihydrouridine(47) in tRNA + NAD(+) = uridine(47) in tRNA + NADH + H(+). The enzyme catalyses 5,6-dihydrouridine(47) in tRNA + NADP(+) = uridine(47) in tRNA + NADPH + H(+). It catalyses the reaction a 5,6-dihydrouridine in mRNA + NAD(+) = a uridine in mRNA + NADH + H(+). It carries out the reaction a 5,6-dihydrouridine in mRNA + NADP(+) = a uridine in mRNA + NADPH + H(+). Functionally, catalyzes the synthesis of dihydrouridine, a modified base found in the D-loop of most tRNAs. Specifically modifies U47 in cytoplasmic tRNAs. Catalyzes the synthesis of dihydrouridine in some mRNAs, thereby affecting their translation. This Oryza sativa subsp. japonica (Rice) protein is tRNA-dihydrouridine(47) synthase [NAD(P)(+)]-like.